A 513-amino-acid polypeptide reads, in one-letter code: GMP synthase [glutamine-hydrolyzing] (513 aa).

Residues 3–200 (SVTVLDFGSQ…LIDIAGIKPD (198 aa)) enclose the Glutamine amidotransferase type-1 domain. Cys80 acts as the Nucleophile in catalysis. Active-site residues include His174 and Glu176. The GMPS ATP-PPase domain maps to 201–388 (WSPKSFIGHQ…LGIAEDILMR (188 aa)). 228–234 (SGGVDST) lines the ATP pocket.

Homodimer.

It catalyses the reaction XMP + L-glutamine + ATP + H2O = GMP + L-glutamate + AMP + diphosphate + 2 H(+). It participates in purine metabolism; GMP biosynthesis; GMP from XMP (L-Gln route): step 1/1. In terms of biological role, catalyzes the synthesis of GMP from XMP. The polypeptide is GMP synthase [glutamine-hydrolyzing] (Chlorobium phaeobacteroides (strain DSM 266 / SMG 266 / 2430)).